Here is a 600-residue protein sequence, read N- to C-terminus: ATP-dependent lipid A-core flippase (600 aa).

The next 4 membrane-spanning stretches (helical) occupy residues 26-46 (VGIF…QPML), 82-102 (LLIV…NYFL), 167-187 (VFLF…MLAI), and 266-286 (PMLQ…VLFL). In terms of domain architecture, ABC transmembrane type-1 spans 30–321 (LLSIIGFVIF…LSEVSSTIQK (292 aa)). An ABC transporter domain is found at 353 to 589 (LEVKNLSFFY…NGYYARLHAM (237 aa)). 387 to 394 (GRSGSGKS) is an ATP binding site.

This sequence belongs to the ABC transporter superfamily. Lipid exporter (TC 3.A.1.106) family. In terms of assembly, homodimer.

The protein resides in the cell inner membrane. The enzyme catalyses ATP + H2O + lipid A-core oligosaccharideSide 1 = ADP + phosphate + lipid A-core oligosaccharideSide 2.. Involved in lipopolysaccharide (LPS) biosynthesis. Translocates lipid A-core from the inner to the outer leaflet of the inner membrane. Transmembrane domains (TMD) form a pore in the inner membrane and the ATP-binding domain (NBD) is responsible for energy generation. The polypeptide is ATP-dependent lipid A-core flippase (Pseudomonas syringae pv. syringae (strain B728a)).